We begin with the raw amino-acid sequence, 190 residues long: Holliday junction branch migration complex subunit RuvA (190 aa).

Residues Met-1 to Lys-63 form a domain I region. The domain II stretch occupies residues Asp-64–Ala-138. A flexible linker region spans residues Ala-138–Ser-142. Residues Tyr-143–Leu-190 are domain III.

This sequence belongs to the RuvA family. In terms of assembly, homotetramer. Forms an RuvA(8)-RuvB(12)-Holliday junction (HJ) complex. HJ DNA is sandwiched between 2 RuvA tetramers; dsDNA enters through RuvA and exits via RuvB. An RuvB hexamer assembles on each DNA strand where it exits the tetramer. Each RuvB hexamer is contacted by two RuvA subunits (via domain III) on 2 adjacent RuvB subunits; this complex drives branch migration. In the full resolvosome a probable DNA-RuvA(4)-RuvB(12)-RuvC(2) complex forms which resolves the HJ.

The protein localises to the cytoplasm. In terms of biological role, the RuvA-RuvB-RuvC complex processes Holliday junction (HJ) DNA during genetic recombination and DNA repair, while the RuvA-RuvB complex plays an important role in the rescue of blocked DNA replication forks via replication fork reversal (RFR). RuvA specifically binds to HJ cruciform DNA, conferring on it an open structure. The RuvB hexamer acts as an ATP-dependent pump, pulling dsDNA into and through the RuvAB complex. HJ branch migration allows RuvC to scan DNA until it finds its consensus sequence, where it cleaves and resolves the cruciform DNA. This Petrotoga mobilis (strain DSM 10674 / SJ95) protein is Holliday junction branch migration complex subunit RuvA.